The following is a 290-amino-acid chain: Shikimate dehydrogenase (NADP(+)) (290 aa).

Residues 18 to 20 (SYS) and Thr66 contribute to the shikimate site. Lys70 serves as the catalytic Proton acceptor. NADP(+) is bound at residue Glu82. 2 residues coordinate shikimate: Asn91 and Asp106. NADP(+)-binding positions include 130–134 (GSGGA) and Met229. Tyr231 provides a ligand contact to shikimate. Position 252 (Gly252) interacts with NADP(+).

The protein belongs to the shikimate dehydrogenase family. Homodimer.

It carries out the reaction shikimate + NADP(+) = 3-dehydroshikimate + NADPH + H(+). It participates in metabolic intermediate biosynthesis; chorismate biosynthesis; chorismate from D-erythrose 4-phosphate and phosphoenolpyruvate: step 4/7. Involved in the biosynthesis of the chorismate, which leads to the biosynthesis of aromatic amino acids. Catalyzes the reversible NADPH linked reduction of 3-dehydroshikimate (DHSA) to yield shikimate (SA). This Chlorobium phaeovibrioides (strain DSM 265 / 1930) (Prosthecochloris vibrioformis (strain DSM 265)) protein is Shikimate dehydrogenase (NADP(+)).